A 388-amino-acid chain; its full sequence is Succinyl-diaminopimelate desuccinylase (388 aa).

His-84 serves as a coordination point for Zn(2+). Asp-86 is an active-site residue. Asp-115 serves as a coordination point for Zn(2+). Catalysis depends on Glu-146, which acts as the Proton acceptor. Residues Glu-147, Glu-175, and His-360 each contribute to the Zn(2+) site.

It belongs to the peptidase M20A family. DapE subfamily. In terms of assembly, homodimer. Requires Zn(2+) as cofactor. Co(2+) serves as cofactor.

The enzyme catalyses N-succinyl-(2S,6S)-2,6-diaminopimelate + H2O = (2S,6S)-2,6-diaminopimelate + succinate. The protein operates within amino-acid biosynthesis; L-lysine biosynthesis via DAP pathway; LL-2,6-diaminopimelate from (S)-tetrahydrodipicolinate (succinylase route): step 3/3. Functionally, catalyzes the hydrolysis of N-succinyl-L,L-diaminopimelic acid (SDAP), forming succinate and LL-2,6-diaminopimelate (DAP), an intermediate involved in the bacterial biosynthesis of lysine and meso-diaminopimelic acid, an essential component of bacterial cell walls. This Helicobacter pylori (strain J99 / ATCC 700824) (Campylobacter pylori J99) protein is Succinyl-diaminopimelate desuccinylase.